The primary structure comprises 1248 residues: ATP-dependent helicase/nuclease subunit A (1248 aa).

Positions 4–480 (TKWTKEQYAA…ILLFKNFRSR (477 aa)) constitute a UvrD-like helicase ATP-binding domain. ATP is bound at residue 25–32 (AAAGAGKT). The region spanning 523-820 (ETVVGGAIEL…RLMSIHKSKG (298 aa)) is the UvrD-like helicase C-terminal domain.

It belongs to the helicase family. AddA subfamily. Heterodimer of AddA and AddB/RexB. Requires Mg(2+) as cofactor.

It catalyses the reaction Couples ATP hydrolysis with the unwinding of duplex DNA by translocating in the 3'-5' direction.. It carries out the reaction ATP + H2O = ADP + phosphate + H(+). Functionally, the heterodimer acts as both an ATP-dependent DNA helicase and an ATP-dependent, dual-direction single-stranded exonuclease. Recognizes the chi site generating a DNA molecule suitable for the initiation of homologous recombination. The AddA nuclease domain is required for chi fragment generation; this subunit has the helicase and 3' -&gt; 5' nuclease activities. The sequence is that of ATP-dependent helicase/nuclease subunit A from Ruminiclostridium cellulolyticum (strain ATCC 35319 / DSM 5812 / JCM 6584 / H10) (Clostridium cellulolyticum).